The chain runs to 547 residues: Beta,beta-carotene 15,15'-dioxygenase (547 aa).

Residues His172, His237, His308, and His514 each coordinate Fe cation. A compositionally biased stretch (basic and acidic residues) spans 528–540; that stretch reads QAASEEQRDRASD. The tract at residues 528-547 is disordered; it reads QAASEEQRDRASDCHGAPLT.

Belongs to the carotenoid oxygenase family. It depends on Fe(2+) as a cofactor. As to expression, highly expressed in retinal pigment epithelium. Also expressed in kidney, testis, liver, brain, small intestine and colon.

It localises to the cytoplasm. Its subcellular location is the cytosol. It catalyses the reaction all-trans-beta-carotene + O2 = 2 all-trans-retinal. It participates in cofactor metabolism; retinol metabolism. Functionally, symmetrically cleaves beta-carotene into two molecules of retinal using a dioxygenase mechanism. This is Beta,beta-carotene 15,15'-dioxygenase from Homo sapiens (Human).